The chain runs to 311 residues: tRNA-cytidine(32) 2-sulfurtransferase (311 aa).

The PP-loop motif signature appears at 47-52 (SGGKDS). Positions 122, 125, and 213 each coordinate [4Fe-4S] cluster.

It belongs to the TtcA family. In terms of assembly, homodimer. The cofactor is Mg(2+). Requires [4Fe-4S] cluster as cofactor.

The protein resides in the cytoplasm. It catalyses the reaction cytidine(32) in tRNA + S-sulfanyl-L-cysteinyl-[cysteine desulfurase] + AH2 + ATP = 2-thiocytidine(32) in tRNA + L-cysteinyl-[cysteine desulfurase] + A + AMP + diphosphate + H(+). Its pathway is tRNA modification. Functionally, catalyzes the ATP-dependent 2-thiolation of cytidine in position 32 of tRNA, to form 2-thiocytidine (s(2)C32). The sulfur atoms are provided by the cysteine/cysteine desulfurase (IscS) system. The polypeptide is tRNA-cytidine(32) 2-sulfurtransferase (Shigella boydii serotype 4 (strain Sb227)).